The sequence spans 244 residues: Phosphoribosylaminoimidazole-succinocarboxamide synthase (244 aa).

Belongs to the SAICAR synthetase family.

It carries out the reaction 5-amino-1-(5-phospho-D-ribosyl)imidazole-4-carboxylate + L-aspartate + ATP = (2S)-2-[5-amino-1-(5-phospho-beta-D-ribosyl)imidazole-4-carboxamido]succinate + ADP + phosphate + 2 H(+). It functions in the pathway purine metabolism; IMP biosynthesis via de novo pathway; 5-amino-1-(5-phospho-D-ribosyl)imidazole-4-carboxamide from 5-amino-1-(5-phospho-D-ribosyl)imidazole-4-carboxylate: step 1/2. The sequence is that of Phosphoribosylaminoimidazole-succinocarboxamide synthase from Prochlorococcus marinus (strain SARG / CCMP1375 / SS120).